Here is a 300-residue protein sequence, read N- to C-terminus: Pantoate--beta-alanine ligase (300 aa).

43-50 (MGYLHSGH) contributes to the ATP binding site. H50 acts as the Proton donor in catalysis. Position 74 (Q74) interacts with (R)-pantoate. Q74 contacts beta-alanine. An ATP-binding site is contributed by 162–165 (GQKD). Q168 contributes to the (R)-pantoate binding site. ATP is bound by residues I191 and 199–202 (KSSR).

Belongs to the pantothenate synthetase family. In terms of assembly, homodimer.

The protein localises to the cytoplasm. It catalyses the reaction (R)-pantoate + beta-alanine + ATP = (R)-pantothenate + AMP + diphosphate + H(+). The protein operates within cofactor biosynthesis; (R)-pantothenate biosynthesis; (R)-pantothenate from (R)-pantoate and beta-alanine: step 1/1. Its function is as follows. Catalyzes the condensation of pantoate with beta-alanine in an ATP-dependent reaction via a pantoyl-adenylate intermediate. The polypeptide is Pantoate--beta-alanine ligase (panC) (Dictyostelium discoideum (Social amoeba)).